The sequence spans 142 residues: Hemoglobin subunit alpha-2 (142 aa).

The 141-residue stretch at 2–142 (VLSAADKSNV…VSTVLTSKYR (141 aa)) folds into the Globin domain. H59 is an O2 binding site. Position 88 (H88) interacts with heme b.

Belongs to the globin family. Heterotetramer of two alpha chains and two beta chains.

In terms of biological role, involved in oxygen transport from the lung to the various peripheral tissues. Its function is as follows. Hemopressin acts as an antagonist peptide of the cannabinoid receptor CNR1. Hemopressin-binding efficiently blocks cannabinoid receptor CNR1 and subsequent signaling. The protein is Hemoglobin subunit alpha-2 (HBA2) of Capra hircus (Goat).